The primary structure comprises 297 residues: Guanylate kinase (297 aa).

The region spanning 4 to 183 (GKMIIISGPS…AVAKITDVLH (180 aa)) is the Guanylate kinase-like domain. 11–18 (GPSGVGKG) contacts ATP. The unknown stretch occupies residues 204-297 (EQIVKEKYMY…EQKHYNNDEF (94 aa)).

Belongs to the guanylate kinase family.

The protein localises to the cytoplasm. It catalyses the reaction GMP + ATP = GDP + ADP. Functionally, essential for recycling GMP and indirectly, cGMP. This chain is Guanylate kinase (gmk), found in Mycoplasma mycoides subsp. mycoides SC (strain CCUG 32753 / NCTC 10114 / PG1).